Reading from the N-terminus, the 382-residue chain is (R,R)-butanediol dehydrogenase (382 aa).

Cys-39 serves as a coordination point for Zn(2+). Position 63 is a phosphoserine (Ser-63). Residues His-73, Cys-103, Cys-120, Cys-123, Cys-131, and Glu-173 each coordinate Zn(2+).

It belongs to the zinc-containing alcohol dehydrogenase family. Homodimer. The cofactor is Zn(2+).

It localises to the cytoplasm. It catalyses the reaction (R,R)-butane-2,3-diol + NAD(+) = (R)-acetoin + NADH + H(+). Its function is as follows. NAD-dependent (R,R)-butanediol dehydrogenase which catalyzes oxidation of (R,R)-butane-2,3-diol to (3R)-acetoin, of meso-butanediol to (3S)-acetoin, and reduction of acetoin. Allows the use of 2,3-butanediol as an aerobic carbon source. The polypeptide is (R,R)-butanediol dehydrogenase (BDH1) (Saccharomyces cerevisiae (strain ATCC 204508 / S288c) (Baker's yeast)).